A 142-amino-acid polypeptide reads, in one-letter code: gSG7 salivary protein (142 aa).

An N-terminal signal peptide occupies residues 1 to 25 (METKLVLALIACGVICLLQTTPTEA). 2 disulfide bridges follow: C83/C138 and C106/C116.

As to quaternary structure, interacts with host coagulation factor XII (F12) (inactive and activated). Interacts with host high molecular weight kininogen (KNG1) (inactive and activated).

The protein localises to the secreted. Zn(2+) modulates binding to host coagulation factor XII (F12) and high molecular weight kininogen (KNG1). In terms of biological role, salivary protein with anticoagulant activity. Inhibits activation of host kallikrein-kinin system by preventing the reciprocal activation of coagulation factor XII (F12) and prekallikrein (KLKB1), and subsequent release of bradykinin. Inhibits host factor XII and high molecular weight kininogen (KNG1) binding to negatively charged surfaces. Weakly inhibits the alternative pathway of complement system activation in the host. The polypeptide is gSG7 salivary protein (Anopheles stephensi (Indo-Pakistan malaria mosquito)).